Reading from the N-terminus, the 512-residue chain is Cytochrome P450 71BT1 (512 aa).

An N-terminal signal peptide occupies residues 1–24 (MENLFIFLFALLLFCFMLLKLSKK). N-linked (GlcNAc...) asparagine glycans are attached at residues N111 and N168. C447 provides a ligand contact to heme.

It belongs to the cytochrome P450 family.

The protein is Cytochrome P450 71BT1 of Catharanthus roseus (Madagascar periwinkle).